Reading from the N-terminus, the 2119-residue chain is MDGVYSEANEENDNTQRPVRRQHSSILKPPRSPLQDLKCGNQTNQEPNPPRKRKSSRRVSFADTIKVFQTESHMKTERNSEISGMNTLLCAPIQTQMQQKEFSITDCNHERKHANDQTVIFSDENQMDLTASHTVMITKGLSDCTKNENSTKIDTTSFLENLKHHAANSRIKKDLACSTVSLSQNIFSEKINSDNFIKRLKTGKHISSSTELDKENAEIPVYSKDSNSASSTYQMHASLGVDENSSNRTRIFREQDDGMNLTQCHTACIKTWIPPSTEAKIGEFKGDKTIYGNECMELTTNYTIQVLSSENNLSERETQTQNGMNVTTVDGATAPAPEKKTALKDKLNAAFQGSFPNPENKIHIIKCHPIESETHTVTQISSQSASTLAVTSKSICSSPAIEGYKTIFHSSSNDAMELTKCLSAMEEEKKLLKADDKYSKICTNPDAGPLREKTIYLEEDSMDITKSHTVAIDNKIFKHDQENIKKEIIAIPIFEKEMVLRNLMPMSKDEKRDVNYISVPQVSKESLQRSQTNTLSVSLTDKKMEFLADEDMDLTKSHTTKLSQVIPTTFDLASKNVTKSYSHSKSPLNEWESLDKQVVLGQHSKLPLPQRKDRDDPDCSHHKIMYSEELQTMDLTKSHTIVIGFGPSEVQEHSKINLEHKNSQLTAESIQTAVNVPAANSRVVTTNDMDMLKDRSTHKPELLKEKQNIKIYGRKSIGRLKIDKTILFSEGNEGDMDITKSCTVKINHRSLLDKHDSHLVSLAGTSKTILHARGQVEMEINRSHTTPLECKIISPSDITPGDLDKTMMSIDDHEELDMTKSHTVFIDYQAEAKGVLPDRLDFQLSKKESLQKPKVTSLAEEIYISKNSESNHLPAKGSQLTILEEGSNSGLGEETNDAQKPGFLNELLSGKTQRRKSLSLKNKSITFPENDKSYREIPQSSAVEINNETRLEDRKGFSFVPLAGTSKPVLSAYGPEDMEISIGQTTASEYKTVPPEEITTIPMDKTVMFVDNFGDLDVTRSHTVFIDCQAKEKVLDEYTNLGIQKTKTLSGSEGDTHIQEITKNPAAQHKHHMTTVIPSSTVVSDQSSMKIKFHKADRDEEVKGKEVEANMLKQTKPESCLLNITDGKNVDFTSSYTADVCRSSDKYSSLPNISSSDNSGGNTMSLCDKNKEKAYNCQVPNEFTYAAILPSTYHMDSKKLSVFPPCPSKEVTQTESAIALLKDEDPVEEPLGEMATFNSKHVSLNLAKDQTEAFVDVSVASQPHLSAQQSPSTQKGQDVARRDEGILAKAGKKALPFLLENVAASTWENESKIPTNVEHFAVTYEKELSISIQTDKCNTNVQSPSNSALTTQVIQTHANAEGALDFLVPSTVSCFSSTKPSLSNLNRKTEEVLDFQTVNLLPPAEQLLEEGSQAHSMSIVQATEIYRLGSRNDRDEESKTFCNEAETTSVPLKTAVKDKTRRCSLGIFLPKLPSKRSCSITGVDDLEQILADAADLTQLETQPVCSKDPGIGSVAAKLNLSPSQFINEENLPVYPGEILSSDSVSLDIEESVLIDTSQRESLPSENKTENCRAQKRTRVEENDVTNEKKIRTHDSAQDQEIFDNHMEEDINKNVNSVLLKSLSRTPSSCSSSLDSIKSDGLSLDVSTQRNSQMESQFLGDTISEESLKEKLKDGQITIKEFFILLQVHILIQKPRQSTLPAKFTINTLPTTEDLMLRQYVYGPRIQIYKEDCELLRQKIDELKISALNQNKLLADVNRNLWEKVKDYSDEELKNYGIYLNKIKSRYTKMTKVFNHQGKVALYNKLVHSAENEKNKLQIKINEMDTILKKINNCLAEVETETKNLENEEKNDAMEEWDSEMRDAEKELEQLKTEEEELQRKFLEVETQKTQTLAQIEFIKEQTTKTEELLDQLSLSEWDVIEWSDDQAVFTFVYDSIELIITFGEPLVGLPFLDKACRKINALSFQSLLDEDKAPPSSLLVHKLIFQYIEEQESWKKKCTAQHQVPQMLQELSLVVNHCRLLGEEIEFLKRWGPNYSLMHINVNNTELRLLFSSCAAFAKFEITLSPSAHYPLVPLPFTIHNHIGKTGHDEIAAIISKVPLEENYLKNVVKQIYQDLLKD.

Residues 1–59 (MDGVYSEANEENDNTQRPVRRQHSSILKPPRSPLQDLKCGNQTNQEPNPPRKRKSSRRV) are disordered. Positions 1–202 (MDGVYSEANE…SDNFIKRLKT (202 aa)) are may mediate oligomerization. Interaction with microtubules regions lie at residues 17–34 (RPVRRQHSSILKPPRSPL) and 53–80 (RKSSRRVSFADTIKVFQTESHMKTERNS). The interaction with PP1CA; contains the protein phosphatase 1 (PP1) interaction motifs SILK, RVXF and phi-phi stretch occupies residues 23–80 (HSSILKPPRSPLQDLKCGNQTNQEPNPPRKRKSSRRVSFADTIKVFQTESHMKTERNS). 3 positions are modified to phosphoserine: Ser-24, Ser-32, and Ser-60. The segment at 124–140 (ENQMDLTASHTVMITKG) is interaction with BUB1. The interaction with BUB1B stretch occupies residues 160–179 (ENLKHHAANSRIKKDLACST). A Phosphoserine modification is found at Ser-538. Thr-540 and Thr-739 each carry phosphothreonine. Copy 1 of the repeat occupies 723 to 827 (DKTILFSEGN…MTKSHTVFID (105 aa)). Residues 723 to 1027 (DKTILFSEGN…VTRSHTVFID (305 aa)) form a 2 X 104 AA approximate repeats region. 2 positions are modified to phosphoserine: Ser-794 and Ser-878. Repeat 2 spans residues 923 to 1027 (KSITFPENDK…VTRSHTVFID (105 aa)). Phosphoserine occurs at positions 1243 and 1464. Positions 1557-1583 (SQRESLPSENKTENCRAQKRTRVEEND) are disordered. Basic and acidic residues predominate over residues 1566 to 1583 (NKTENCRAQKRTRVEEND). Positions 1577 to 1590 (TRVEENDVTNEKKI) match the Nuclear localization signal motif. Phosphoserine occurs at positions 1616, 1627, and 1642. The required for interaction with ZWINT stretch occupies residues 1763–1890 (KVKDYSDEEL…FLEVETQKTQ (128 aa)). Residues 1799–1890 (VALYNKLVHS…FLEVETQKTQ (92 aa)) are a coiled coil. Residues 1873 to 2093 (EEEELQRKFL…GKTGHDEIAA (221 aa)) are interaction with NSL1, DSN1 and required for assembly into the outer kinetochore.

Component of the KNL1 complex composed of KNL1 and ZWINT. Part of the ten-subunit outer kinetochore KMN network that includes the KNL1, MIS12 and NDC80 complexes; a bioriented kinetochore contains approximately 150 copies of the network. Interacts (via C-terminus) with the MIS12 complex subunits NSL1 (via C-terminus), PMF1 and DSN1; the interaction is direct. Interacts (via N-terminal region) with BUB1B (via BUB1 N-terminal domain); the interaction is direct and is required for cell cycle arrest upon activation of the mitotic spindle assembly checkpoint. Interacts (via N-terminal region) with BUB1 (via BUB1 N-terminal domain); the interaction is direct. Interacts with the protein phosphatase PP1 subunit PPP1CA; the interaction is direct and mutually exclusive with binding to microtubules. Interacts with the protein phosphatase PP1 subunit PPP1CC; the interaction is direct and mutually exclusive with binding to microtubules. In terms of processing, phosphorylation by AURKB negatively regulates its interaction with protein phosphatase 1 (PP1) subunit PPP1CA and with microtubules. As to expression, expressed in oocytes during meiotic progression (at protein level). Expressed during spermatogenesis.

It is found in the nucleus. The protein localises to the chromosome. Its subcellular location is the centromere. The protein resides in the kinetochore. It localises to the cytoplasm. Acts as a component of the outer kinetochore KNL1 complex that serves as a docking point for spindle assembly checkpoint components and mediates microtubule-kinetochore interactions. Kinetochores, consisting of a centromere-associated inner segment and a microtubule-contacting outer segment, play a crucial role in chromosome segregation by mediating the physical connection between centromeric DNA and spindle microtubules. The outer kinetochore is made up of the ten-subunit KMN network, comprising the MIS12, NDC80 and KNL1 complexes, and auxiliary microtubule-associated components; together they connect the outer kinetochore with the inner kinetochore, bind microtubules, and mediate interactions with mitotic checkpoint proteins that delay anaphase until chromosomes are bioriented on the spindle. Required for kinetochore binding by a distinct subset of kMAPs (kinetochore-bound microtubule-associated proteins) and motors. Acts in coordination with CENPK to recruit the NDC80 complex to the outer kinetochore. Can bind either to microtubules or to the protein phosphatase 1 (PP1) catalytic subunits PPP1CA and PPP1CC (via overlapping binding sites), it has higher affinity for PP1. Recruits MAD2L1 to the kinetochore and also directly links BUB1 and BUB1B to the kinetochore. In addition to orienting mitotic chromosomes, it is also essential for alignment of homologous chromosomes during meiotic metaphase I. In meiosis I, required to activate the spindle assembly checkpoint at unattached kinetochores to correct erroneous kinetochore-microtubule attachments. The protein is Outer kinetochore KNL1 complex subunit KNL1 of Mus musculus (Mouse).